Consider the following 457-residue polypeptide: Protein OS-9 homolog (457 aa).

Residues 1 to 22 (MIFLPVTSVVFAISWIYSGVSA) form the signal peptide. Residues asparagine 47 and asparagine 71 are each glycosylated (N-linked (GlcNAc...) asparagine). An MRH domain is found at 104 to 222 (NPIEMNTVPI…RLFLPQLCEL (119 aa)). Tryptophan 116 is a binding site for a mannooligosaccharide derivative. Residues asparagine 142 and asparagine 147 are each glycosylated (N-linked (GlcNAc...) asparagine). 2 disulfides stabilise this stretch: cysteine 174–cysteine 208 and cysteine 189–cysteine 220. Positions 175, 181, 204, and 210 each coordinate a mannooligosaccharide derivative. Asparagine 389 is a glycosylation site (N-linked (GlcNAc...) asparagine).

This sequence belongs to the OS-9 family. In terms of assembly, interacts with missfolded ER lumenal proteins.

Its subcellular location is the endoplasmic reticulum membrane. In terms of biological role, lectin involved in the quality control of the secretory pathway. As a member of the endoplasmic reticulum-associated degradation lumenal (ERAD-L) surveillance system, targets misfolded endoplasmic reticulum lumenal glycoproteins for degradation. The sequence is that of Protein OS-9 homolog (YOS9) from Kluyveromyces lactis (strain ATCC 8585 / CBS 2359 / DSM 70799 / NBRC 1267 / NRRL Y-1140 / WM37) (Yeast).